The chain runs to 460 residues: Inactive ubiquitin carboxyl-terminal hydrolase MINDY-4B (460 aa).

The interval 41–76 is disordered; the sequence is TNNSTPQNHEGNHTSADENEDGTGLSQPKGQGHLPS.

It belongs to the MINDY deubiquitinase family. FAM188 subfamily.

This chain is Inactive ubiquitin carboxyl-terminal hydrolase MINDY-4B, found in Homo sapiens (Human).